The following is an 822-amino-acid chain: IQ and AAA domain-containing protein 1-like (822 aa).

Residues glutamine 206–glutamate 235 enclose the IQ domain. The segment covering arginine 338–lysine 363 has biased composition (basic and acidic residues). Disordered stretches follow at residues arginine 338 to lysine 378 and arginine 457 to threonine 484. Positions lysine 464 to lysine 479 are enriched in basic residues. Glycine 569 to lysine 576 serves as a coordination point for ATP.

Belongs to the AAA ATPase family.

This is IQ and AAA domain-containing protein 1-like (Iqca1l) from Rattus norvegicus (Rat).